An 85-amino-acid chain; its full sequence is ATP synthase subunit c (85 aa).

2 helical membrane passes run 1 to 21 (MLAW…ALVG) and 53 to 73 (LLFA…VALI).

The protein belongs to the ATPase C chain family. As to quaternary structure, F-type ATPases have 2 components, F(1) - the catalytic core - and F(0) - the membrane proton channel. F(1) has five subunits: alpha(3), beta(3), gamma(1), delta(1), epsilon(1). F(0) has three main subunits: a(1), b(2) and c(10-14). The alpha and beta chains form an alternating ring which encloses part of the gamma chain. F(1) is attached to F(0) by a central stalk formed by the gamma and epsilon chains, while a peripheral stalk is formed by the delta and b chains.

The protein localises to the cell inner membrane. In terms of biological role, f(1)F(0) ATP synthase produces ATP from ADP in the presence of a proton or sodium gradient. F-type ATPases consist of two structural domains, F(1) containing the extramembraneous catalytic core and F(0) containing the membrane proton channel, linked together by a central stalk and a peripheral stalk. During catalysis, ATP synthesis in the catalytic domain of F(1) is coupled via a rotary mechanism of the central stalk subunits to proton translocation. Key component of the F(0) channel; it plays a direct role in translocation across the membrane. A homomeric c-ring of between 10-14 subunits forms the central stalk rotor element with the F(1) delta and epsilon subunits. This chain is ATP synthase subunit c, found in Dictyoglomus turgidum (strain DSM 6724 / Z-1310).